A 1335-amino-acid chain; its full sequence is Phospholipid-transporting ATPase IK (1335 aa).

The Cytoplasmic portion of the chain corresponds to 1 to 74 (MDGVHLGENL…LYEQFHRMSN (74 aa)). A helical membrane pass occupies residues 75–95 (LYFLFIIILQGIPEISTLPWF). At 96–295 (TLFAPLVCLF…LDLMMNKLVA (200 aa)) the chain is on the exoplasmic loop side. Residues 296-316 (LIFLSLVIASLLLTVGFTFMV) form a helical membrane-spanning segment. At 317–339 (KQFKAKHYYMSPTHGRSDAMESF) the chain is on the cytoplasmic side. A helical membrane pass occupies residues 340-360 (FIFWGFLILLSVMVPMAMFII). Residues 361–917 (AEFIYLGNSI…YMRVCKFLRY (557 aa)) are Exoplasmic loop-facing. The active-site 4-aspartylphosphate intermediate is aspartate 407. Positions 407, 408, 409, 504, 545, 568, 601, 681, 682, 683, 831, and 837 each coordinate ATP. A Mg(2+)-binding site is contributed by aspartate 407. Threonine 409 is a binding site for Mg(2+). Aspartate 857 is a Mg(2+) binding site. 2 residues coordinate ATP: asparagine 860 and aspartate 861. Mg(2+) is bound at residue aspartate 861. A helical transmembrane segment spans residues 918-938 (FFYKTVASMMAQIWFSLVNGF). The Cytoplasmic portion of the chain corresponds to 939–946 (SAQPLYEG). The chain crosses the membrane as a helical span at residues 947–967 (WFLALFNLLYSTLPVLYIGLF). At 968–995 (EQDVTAEKSLKMPELYMAGQKGELFNYS) the chain is on the exoplasmic loop side. A helical membrane pass occupies residues 996–1016 (IFMQAITHGTITSMINFFVTV). The Cytoplasmic segment spans residues 1017-1033 (MVSSDMSKAGSSHDYQS). The helical transmembrane segment at 1034-1054 (LGVLVAISSLLSVTLEVMLVV) threads the bilayer. Position 1055 (lysine 1055) is a topological domain, exoplasmic loop. The helical transmembrane segment at 1056-1076 (YWTLLFVGAVVLSLSSYVLMT) threads the bilayer. The Cytoplasmic portion of the chain corresponds to 1077–1104 (SLTQSLWMYRISPKTFPFLFADYNVLFE). The helical transmembrane segment at 1105–1125 (PCSLLLIVLNVALNVLPMLAL) threads the bilayer. The Exoplasmic loop portion of the chain corresponds to 1126–1335 (RTIHRTVLKQ…SQLEVPRKQS (210 aa)). Disordered regions lie at residues 1192–1215 (VDDSDGGTVCESLNPPEEDIPLQN), 1236–1280 (FGKG…GKLL), and 1314–1335 (SPLWRDSASSSPSQLEVPRKQS). Polar residues-rich tracts occupy residues 1246–1255 (PNTSSQTMEK) and 1266–1276 (QKLPTTTSATS).

Belongs to the cation transport ATPase (P-type) (TC 3.A.3) family. Type IV subfamily. Requires Mg(2+) as cofactor. Expressed in testis, specifically in spermatids within seminiferous tubules (at protein level).

The protein localises to the cytoplasmic vesicle. It is found in the secretory vesicle. It localises to the acrosome membrane. The protein resides in the endoplasmic reticulum membrane. It carries out the reaction ATP + H2O + phospholipidSide 1 = ADP + phosphate + phospholipidSide 2.. The catalysed reaction is a 1,2-diacyl-sn-glycero-3-phospho-L-serine(out) + ATP + H2O = a 1,2-diacyl-sn-glycero-3-phospho-L-serine(in) + ADP + phosphate + H(+). In terms of biological role, P4-ATPase flippase which catalyzes the hydrolysis of ATP coupled to the transport of aminophospholipids from the outer to the inner leaflet of various membranes and ensures the maintenance of asymmetric distribution of phospholipids. Phospholipid translocation also seems to be implicated in vesicle formation and in uptake of lipid signaling molecules. May be responsible for the maintenance of asymmetric distribution of phosphatidylserine (PS) in spermatozoa membranes. Involved in acrosome reactions and binding of spermatozoa to zona pellucida. This chain is Phospholipid-transporting ATPase IK, found in Mus musculus (Mouse).